A 298-amino-acid polypeptide reads, in one-letter code: Ethanolamine ammonia-lyase small subunit (298 aa).

The targets protein to the BMC stretch occupies residues 1 to 19 (MDQKQIEEIVRSVMASMGQ). 3 residues coordinate adenosylcob(III)alamin: Val210, Glu231, and Cys261.

The protein belongs to the EutC family. As to quaternary structure, the basic unit is a heterodimer which dimerizes to form tetramers. The heterotetramers trimerize; 6 large subunits form a core ring with 6 small subunits projecting outwards. Interacts with EutS, which targets it to the interior of the BMC. It depends on adenosylcob(III)alamin as a cofactor.

The protein localises to the bacterial microcompartment. The catalysed reaction is ethanolamine = acetaldehyde + NH4(+). Its pathway is amine and polyamine degradation; ethanolamine degradation. In terms of biological role, catalyzes the deamination of various vicinal amino-alcohols to oxo compounds. It is spontaneously inactivated by its substrate and reactivated by EutA. May play a role in bacterial microcompartment (BMC) assembly or maintenance. Directly targeted to the BMC. Its function is as follows. Expression of the eut operon allows this bacteria to use ethanolamine (EA) as a carbon, nitrogen and energy source. It relies on cobalamin (vitamin B12) both as a cofactor for the ethanolamine ammonia-lyase activity and to induce the operon. EA enhances bacterial survival in macrophages in a concentration-dependent manner, suggesting it is an important nutrient during infection. This Salmonella typhimurium (strain LT2 / SGSC1412 / ATCC 700720) protein is Ethanolamine ammonia-lyase small subunit.